Here is a 348-residue protein sequence, read N- to C-terminus: Dihydroorotase (348 aa).

Zn(2+) is bound by residues histidine 14 and histidine 16. Substrate is bound by residues histidine 16 to arginine 18 and asparagine 42. Residues lysine 100, histidine 137, and histidine 175 each coordinate Zn(2+). Lysine 100 carries the N6-carboxylysine modification. Substrate is bound at residue histidine 137. Residue leucine 220 participates in substrate binding. Residue aspartate 248 coordinates Zn(2+). Aspartate 248 is a catalytic residue. Substrate-binding residues include histidine 252 and alanine 264.

The protein belongs to the metallo-dependent hydrolases superfamily. DHOase family. Class II DHOase subfamily. In terms of assembly, homodimer. Zn(2+) is required as a cofactor.

It catalyses the reaction (S)-dihydroorotate + H2O = N-carbamoyl-L-aspartate + H(+). Its pathway is pyrimidine metabolism; UMP biosynthesis via de novo pathway; (S)-dihydroorotate from bicarbonate: step 3/3. In terms of biological role, catalyzes the reversible cyclization of carbamoyl aspartate to dihydroorotate. This is Dihydroorotase from Pseudomonas aeruginosa (strain ATCC 15692 / DSM 22644 / CIP 104116 / JCM 14847 / LMG 12228 / 1C / PRS 101 / PAO1).